The following is a 394-amino-acid chain: NADH dehydrogenase [ubiquinone] iron-sulfur protein 2 (394 aa).

Belongs to the complex I 49 kDa subunit family. Complex I is composed of at least 49 different subunits. This is a component of the iron-sulfur (IP) fragment of the enzyme.

It localises to the mitochondrion. The enzyme catalyses a ubiquinone + NADH + 5 H(+)(in) = a ubiquinol + NAD(+) + 4 H(+)(out). Functionally, core subunit of the mitochondrial membrane respiratory chain NADH dehydrogenase (Complex I) that is believed to belong to the minimal assembly required for catalysis. Complex I functions in the transfer of electrons from NADH to the respiratory chain. The immediate electron acceptor for the enzyme is believed to be ubiquinone. Component of the iron-sulfur (IP) fragment of the enzyme. This is NADH dehydrogenase [ubiquinone] iron-sulfur protein 2 (NAD7) from Arabidopsis thaliana (Mouse-ear cress).